We begin with the raw amino-acid sequence, 834 residues long: Transcription intermediary factor 1-beta (834 aa).

An N-acetylalanine modification is found at Ala2. Residues 13–23 (AATAASAASGS) are compositionally biased toward low complexity. The segment at 13–56 (AATAASAASGSPGSGEGSAGGEKRPAASSAAAASAAASSPAGGG) is disordered. Residues Ser23, Ser26, and Ser30 each carry the phosphoserine modification. Lys35 participates in a covalent cross-link: Glycyl lysine isopeptide (Lys-Gly) (interchain with G-Cter in SUMO2). Residues 38–52 (AASSAAAASAAASSP) show a composition bias toward low complexity. A Phosphoserine modification is found at Ser51. The RING-type zinc finger occupies 66–122 (CGVCRERLRPERDPRLLPCLHSACSACLGPATPAAANNSGDGGSAGDGAMVDCPVCK). A Glycyl lysine isopeptide (Lys-Gly) (interchain with G-Cter in SUMO2) cross-link involves residue Lys128. A Phosphoserine modification is found at Ser139. Residues 149–196 (DANQCCTSCEDNAPATSYCVECSEPLCETCVEAHQRVKYTKDHTVRST) form a B box-type 1 zinc finger. Zn(2+)-binding residues include Cys154, Cys157, Cys178, and His182. A Glycyl lysine isopeptide (Lys-Gly) (interchain with G-Cter in SUMO2) cross-link involves residue Lys200. The segment at 205-246 (ERTVYCNVHKHEPLVLFCESCDTLTCRDCQLNAHKDHQYQFL) adopts a B box-type 2 zinc-finger fold. Cys210, His213, Cys233, and His238 together coordinate Zn(2+). A leucine zipper alpha helical coiled-coil region region spans residues 247–377 (EDAVRNQRKL…LIYFQLHRAL (131 aa)). Residues 248–377 (DAVRNQRKLL…LIYFQLHRAL (130 aa)) are interaction with MAGEC2. Glycyl lysine isopeptide (Lys-Gly) (interchain with G-Cter in SUMO2) cross-links involve residues Lys255 and Lys262. Lys267 is subject to N6-acetyllysine. Lys273 participates in a covalent cross-link: Glycyl lysine isopeptide (Lys-Gly) (interchain with G-Cter in SUMO2). The residue at position 305 (Lys305) is an N6-acetyllysine; alternate. Lys305 participates in a covalent cross-link: Glycyl lysine isopeptide (Lys-Gly) (interchain with G-Cter in SUMO2); alternate. Residue Lys320 forms a Glycyl lysine isopeptide (Lys-Gly) (interchain with G-Cter in SUMO2) linkage. The residue at position 341 (Lys341) is an N6-acetyllysine. Lys367 participates in a covalent cross-link: Glycyl lysine isopeptide (Lys-Gly) (interchain with G-Cter in SUMO2). Positions 367-371 (KLIYF) are involved in binding PPP1CA. At Lys378 the chain carries N6-acetyllysine; alternate. Residue Lys378 forms a Glycyl lysine isopeptide (Lys-Gly) (interchain with G-Cter in SUMO2); alternate linkage. A Glycyl lysine isopeptide (Lys-Gly) (interchain with G-Cter in SUMO1); alternate cross-link involves residue Lys378. Lys408 is covalently cross-linked (Glycyl lysine isopeptide (Lys-Gly) (interchain with G-Cter in SUMO2)). Positions 412–480 (ERPGTNSTGP…SRSGEGEVSG (69 aa)) are disordered. A Phosphoserine modification is found at Ser418. Residue Lys435 forms a Glycyl lysine isopeptide (Lys-Gly) (interchain with G-Cter in SUMO2) linkage. The span at 435-444 (KQGSGSSQPM) shows a compositional bias: polar residues. Phosphoserine occurs at positions 438, 440, and 454. Lys469 participates in a covalent cross-link: Glycyl lysine isopeptide (Lys-Gly) (interchain with G-Cter in SUMO2); alternate. A Glycyl lysine isopeptide (Lys-Gly) (interchain with G-Cter in SUMO1); alternate cross-link involves residue Lys469. Arg470 bears the Citrulline mark. Ser471 carries the phosphoserine modification. Position 472 is a citrulline (Arg472). 3 positions are modified to phosphoserine: Ser473, Ser479, and Ser489. Residues 476 to 513 (GEVSGLLRKVPRVSLERLDLDLTSDSQPPVFKVFPGST) are HP1 box. The PxVxL motif motif lies at 481–494 (LLRKVPRVSLERLD). The residue at position 498 (Thr498) is a Phosphothreonine. Ser501 is modified (phosphoserine). Lys507 participates in a covalent cross-link: Glycyl lysine isopeptide (Lys-Gly) (interchain with G-Cter in SUMO2). Lys554 is covalently cross-linked (Glycyl lysine isopeptide (Lys-Gly) (interchain with G-Cter in SUMO2); alternate). Lys554 is covalently cross-linked (Glycyl lysine isopeptide (Lys-Gly) (interchain with G-Cter in SUMO); alternate). Lys575 participates in a covalent cross-link: Glycyl lysine isopeptide (Lys-Gly) (interchain with G-Cter in SUMO2). The interval 581-602 (LTEGPGAEGPRLASPSGSTSSG) is disordered. Position 594 is a phosphoserine (Ser594). The PHD-type zinc finger occupies 625–672 (ATICRVCQKPGDLVMCNQCEFCFHLDCHLPALQDVPGEEWSCSLCHVL). Lys676 participates in a covalent cross-link: Glycyl lysine isopeptide (Lys-Gly) (interchain with G-Cter in SUMO). Phosphoserine is present on residues Ser683, Ser689, and Ser697. Residues 695–799 (KLSPANQRKC…RFFETRMNDA (105 aa)) form the Bromo domain. A Glycyl lysine isopeptide (Lys-Gly) (interchain with G-Cter in SUMO2); alternate cross-link involves residue Lys750. A Glycyl lysine isopeptide (Lys-Gly) (interchain with G-Cter in SUMO1); alternate cross-link involves residue Lys750. Lys750 participates in a covalent cross-link: Glycyl lysine isopeptide (Lys-Gly) (interchain with G-Cter in SUMO); alternate. At Ser752 the chain carries Phosphoserine. Tyr755 is modified (phosphotyrosine). A Phosphoserine modification is found at Ser757. N6-acetyllysine; alternate is present on residues Lys770, Lys774, and Lys779. Residues Lys770, Lys774, and Lys779 each participate in a glycyl lysine isopeptide (Lys-Gly) (interchain with G-Cter in SUMO2); alternate cross-link. Lys779 participates in a covalent cross-link: Glycyl lysine isopeptide (Lys-Gly) (interchain with G-Cter in SUMO1); alternate. Ser784 carries the post-translational modification Phosphoserine. Lys804 is covalently cross-linked (Glycyl lysine isopeptide (Lys-Gly) (interchain with G-Cter in SUMO2)). A Phosphoserine; by ATM and ATR and dsDNA kinase modification is found at Ser824.

It belongs to the TRIM/RBCC family. As to quaternary structure, oligomer; the RBCC domain homotrimerizes and interacts with one molecule of KRAB to form the KRAB-KAP1 corepressor complex. Interacts with SETX. Binding to a KRAB domain is an absolute requirement for silencing gene expression. Interacts with a number of KRAB-ZFP proteins including ZNF10, ZFP53, ZFP68, ZNF382 and ZNF256. Interacts with NCOR1, NR3C1 and CHD3. Interacts with CEBPB (via the RING-type and PHD-type zinc fingers). Interacts with CBX5 (via the PxVxL motif); the interaction occurs in interphase nuclei and competes for binding POGZ. Interacts with POGZ; the interaction competes for interaction with CBX5. Interacts with SETDB1; the interaction is enhanced by KAP1 sumoylation, stimulates SETDB1 histone methyltransferase activity and gene silencing. Interacts (via the PHD-type zinc finger) with UBE2I; the interaction is required for sumoylation and repressor activity. Component of the TRIM28/KAP1-ERBB4-MDM2 complex involved in connecting growth factor and DNA damage responses. Interacts directly with ERBB4; the interaction represses ERBB4-mediated transcription activity. Interacts with MDM2; the interaction contributes to p53/TP53 inactivation. Component of the TRIM28/KAP1-MDM2-p53/TP53; involved in regulating p53/TP53 stabilization and activity. Interacts (via the leucine zipper alpha helical coiled-coil) with E2F1 (central region); the interaction inhibits E2F1 acetylation and transcriptional activity. Interacts with PPP1CA; the interaction dephosphorylates TRIM28 at Ser-824 and forms a complex at the p21 promoter site. Interacts with PPP1CB; the interaction is weak but is increased on dephosphorylation at Ser-824. Interacts with CEBPB and NR3C1. Interacts with CBX5 (via the PxVxL motif); the interaction occurs in interphase nuclei and competes for binding POGZ. Component of a ternary complex that includes TRIM28, a HP1 protein (CBX1, CBX3 OR CBX5), a KRAB domain-containing protein, and DNA. Interacts with SMARCAD1. Interacts with, and sumoylates IRF7. Interacts with MAGEC2. Part of a complex composed of TRIM28, HDAC1, HDAC2 and EHMT2. Interacts (via the RBCC domain) with KOX1 (via the KRAB domain), ZNF268 (via the KRAB domain) and ZNF300 (via the KRAB domain); the interactions increase KOX1, ZNF268 and ZNF300 nuclear localization activities. Interacts with AICDA. The large PER complex involved in the histone methylation is composed of at least PER2, CBX3, TRIM28, SUV39H1 and/or SUV39H2; CBX3 mediates the formation of the complex. Interacts with NR4A3; the interactions potentiates NR4A3 activity on NurRE promoter. Interacts (unphosphorylated or phosphorylated form) with ZBTB1 (via BTB domain). Probably part of a corepressor complex containing ZNF304, TRIM28, SETDB1 and DNMT1. Interacts with ATRX. Forms a complex with ATRX, SETDB1 and ZNF274. Interacts with ZFP568; the interaction mediates ZFP568 transcriptional repression activity. Interacts with RRP1B. Interacts with CRY1. Interacts with ZNF263; recruited to the SIX3 promoter along with other proteins involved in chromatin modification and transcriptional corepression where it contributes to transcriptional repression. Interacts with CYREN (via XLF motif). Interacts with TRIM17; this interaction prevents TRIM28 activity. Interacts with ZNF746. Interacts with PHF13. Interacts with ZNF354C. Interacts with ZNF432; the interaction is independent of PARP1. ATM-induced phosphorylation on Ser-824 represses sumoylation leading to the de-repression of expression of a subset of genes involved in cell cycle control and apoptosis in response to genotoxic stress. Dephosphorylation by the phosphatases, PPP1CA and PP1CB forms, allows sumoylation and expression of TRIM28 target genes. Post-translationally, sumoylation/desumoylation events regulate TRIM28-mediated transcriptional repression. Sumoylation is required for interaction with CHD3 and SETDB1 and the corepressor activity. Represses and is repressed by Ser-824 phosphorylation. Enhances the TRIM28 corepressor activity, inhibiting transcriptional activity of a number of genes including GADD45A and CDKN1A/p21. Lys-554, Lys-779 and Lys-804 are the major sites of sumoylation. In response to Dox-induced DNA damage, enhanced phosphorylation on Ser-824 prevents sumoylation and allows de-repression of CDKN1A/p21. In terms of processing, auto-ubiquitinated; enhanced by MAGEA2 and MAGEC2. Citrullinated by PADI4. Post-translationally, ADP-ribosylated by SIRT6, promoting TRIM28/KAP1 interaction with CBX5, thereby contributing to the packaging of LINE-1 retrotransposon elements into transcriptionally repressive heterochromatin.

The protein localises to the nucleus. It catalyses the reaction S-ubiquitinyl-[E2 ubiquitin-conjugating enzyme]-L-cysteine + [acceptor protein]-L-lysine = [E2 ubiquitin-conjugating enzyme]-L-cysteine + N(6)-ubiquitinyl-[acceptor protein]-L-lysine.. It functions in the pathway protein modification; protein sumoylation. Nuclear corepressor for KRAB domain-containing zinc finger proteins (KRAB-ZFPs). Mediates gene silencing by recruiting CHD3, a subunit of the nucleosome remodeling and deacetylation (NuRD) complex, and SETDB1 (which specifically methylates histone H3 at 'Lys-9' (H3K9me)) to the promoter regions of KRAB target genes. Enhances transcriptional repression by coordinating the increase in H3K9me, the decrease in histone H3 'Lys-9 and 'Lys-14' acetylation (H3K9ac and H3K14ac, respectively) and the disposition of HP1 proteins to silence gene expression. Recruitment of SETDB1 induces heterochromatinization. May play a role as a coactivator for CEBPB and NR3C1 in the transcriptional activation of ORM1. Also a corepressor for ERBB4. Inhibits E2F1 activity by stimulating E2F1-HDAC1 complex formation and inhibiting E2F1 acetylation. May serve as a partial backup to prevent E2F1-mediated apoptosis in the absence of RB1. Important regulator of CDKN1A/p21(CIP1). Has E3 SUMO-protein ligase activity toward itself via its PHD-type zinc finger. Specifically sumoylates IRF7, thereby inhibiting its transactivation activity. Ubiquitinates p53/TP53 leading to its proteasomal degradation; the function is enhanced by MAGEC2 and MAGEA2, and possibly MAGEA3 and MAGEA6. Mediates the nuclear localization of KOX1, ZNF268 and ZNF300 transcription factors. Probably forms a corepressor complex required for activated KRAS-mediated promoter hypermethylation and transcriptional silencing of tumor suppressor genes (TSGs) or other tumor-related genes in colorectal cancer (CRC) cells. Required to maintain a transcriptionally repressive state of genes in undifferentiated embryonic stem cells (ESCs). In ESCs, in collaboration with SETDB1, is also required for H3K9me3 and silencing of endogenous and introduced retroviruses in a DNA-methylation independent-pathway. Associates at promoter regions of tumor suppressor genes (TSGs) leading to their gene silencing. The SETDB1-TRIM28-ZNF274 complex may play a role in recruiting ATRX to the 3'-exons of zinc-finger coding genes with atypical chromatin signatures to establish or maintain/protect H3K9me3 at these transcriptionally active regions. Acts as a corepressor for ZFP568. This is Transcription intermediary factor 1-beta from Mus musculus (Mouse).